The sequence spans 426 residues: MSNSHTLFEAAQAHIPGGVNSPVRAFKGVGGDPVFFESAKGAYLTDADGKQYIDYVASWGPAILGHTHPDVIKAVQTQAEKGLSFGAPTEIETTMADMVCDLIPSMDMVRMVSSGTEATMTAIRLARGYTGRDKIVKFEGCYHGHSDSLLVKAGSGALTLGVPSSPGVPACLAQETLTLTHNDSEEVKKVFSEIGDQIACIIVEPVAGNMNCIPPEDGFLETLREVCDESGAVLIFDEVMCGFRVGLTGAQGRYNITPDLTTFGKVIGGGMPVGAFGGKKEVMQHIAPLGPVYQAGTLSGNPIAMTAGLKTLELISKPGFFEELEAKTTKLVNGLQKAADEAGIAFTTNQVGAMFGFFFSEEKDIRRFSQVAKGNMEQFKAFYHGMLDEGIYLAPSAFEAGFVSSAHTDQDIDDTIAAAKKVMATL.

K265 is subject to N6-(pyridoxal phosphate)lysine.

Belongs to the class-III pyridoxal-phosphate-dependent aminotransferase family. HemL subfamily. As to quaternary structure, homodimer. It depends on pyridoxal 5'-phosphate as a cofactor.

It localises to the cytoplasm. It carries out the reaction (S)-4-amino-5-oxopentanoate = 5-aminolevulinate. The protein operates within porphyrin-containing compound metabolism; protoporphyrin-IX biosynthesis; 5-aminolevulinate from L-glutamyl-tRNA(Glu): step 2/2. In Hydrogenovibrio crunogenus (strain DSM 25203 / XCL-2) (Thiomicrospira crunogena), this protein is Glutamate-1-semialdehyde 2,1-aminomutase.